Reading from the N-terminus, the 270-residue chain is uncharacterized protein (270 aa).

Residues 1–22 form the signal peptide; the sequence is MEYIKKIALYMSVLLLIIFIGG. C23 carries N-palmitoyl cysteine lipidation. A lipid anchor (S-diacylglycerol cysteine) is attached at C23.

This sequence belongs to the staphylococcal tandem lipoprotein family.

The protein localises to the cell membrane. This is an uncharacterized protein from Staphylococcus aureus (strain USA300).